The primary structure comprises 446 residues: MSDYLSVSTLTKYLKLKFDKDPYLERVYLTGQVSNFRRRPNHQYFSLKDDKSVIQATMWSGHFKKLGFELEEGMKVNVVGRVQLYEPSGSYSIIVEKAEPDGIGALAIQFEQLKKKLSQAGYFDDRHKQLIPQFVRKIGVVTSPSGAVIRDIITTVSRRFPGVEILLFPTKVQGEGAAQEIAQTIALANEKKDLDLLIVGRGGGSIEDLWAFNEECVVEAIFESRLPVISSVGHETDTTLADFVADRRAATPTAAAELATPVTKIDILSWITERENRMYQSSLRLIRTKEERLQKSKQSVIFRQPERLYDGFLQKLDNLNQQLTYSMRDKLQTVRQKQGLLHQKLQGIDLKQRIHIYQERVVQSRRLLSSTMTSQYDSKLARFEKAQDALISLDSSRIVARGYAIIEKNHTLVSTTNGINEGDHLQVKMQDGLLEVEVKDVRQENI.

Belongs to the XseA family. As to quaternary structure, heterooligomer composed of large and small subunits.

It localises to the cytoplasm. It catalyses the reaction Exonucleolytic cleavage in either 5'- to 3'- or 3'- to 5'-direction to yield nucleoside 5'-phosphates.. Bidirectionally degrades single-stranded DNA into large acid-insoluble oligonucleotides, which are then degraded further into small acid-soluble oligonucleotides. This chain is Exodeoxyribonuclease 7 large subunit, found in Streptococcus agalactiae serotype Ia (strain ATCC 27591 / A909 / CDC SS700).